A 196-amino-acid chain; its full sequence is Small ribosomal subunit protein uS5 (196 aa).

The 64-residue stretch at F17 to V80 folds into the S5 DRBM domain. The disordered stretch occupies residues G164–Q196. The segment covering S170–T183 has biased composition (polar residues).

This sequence belongs to the universal ribosomal protein uS5 family. In terms of assembly, part of the 30S ribosomal subunit. Contacts proteins S4 and S8.

In terms of biological role, with S4 and S12 plays an important role in translational accuracy. Functionally, located at the back of the 30S subunit body where it stabilizes the conformation of the head with respect to the body. The polypeptide is Small ribosomal subunit protein uS5 (Deinococcus radiodurans (strain ATCC 13939 / DSM 20539 / JCM 16871 / CCUG 27074 / LMG 4051 / NBRC 15346 / NCIMB 9279 / VKM B-1422 / R1)).